Consider the following 264-residue polypeptide: Hydroxyethylthiazole kinase (264 aa).

Position 40 (methionine 40) interacts with substrate. The ATP site is built by lysine 116 and threonine 161. Glycine 188 contacts substrate.

This sequence belongs to the Thz kinase family. The cofactor is Mg(2+).

The catalysed reaction is 5-(2-hydroxyethyl)-4-methylthiazole + ATP = 4-methyl-5-(2-phosphooxyethyl)-thiazole + ADP + H(+). It participates in cofactor biosynthesis; thiamine diphosphate biosynthesis; 4-methyl-5-(2-phosphoethyl)-thiazole from 5-(2-hydroxyethyl)-4-methylthiazole: step 1/1. In terms of biological role, catalyzes the phosphorylation of the hydroxyl group of 4-methyl-5-beta-hydroxyethylthiazole (THZ). In Staphylococcus carnosus (strain TM300), this protein is Hydroxyethylthiazole kinase.